The following is a 504-amino-acid chain: Anaerobic nitric oxide reductase transcription regulator NorR (504 aa).

Residue Asp-57 is modified to 4-aspartylphosphate. The region spanning 187 to 416 is the Sigma-54 factor interaction domain; the sequence is MIGLSPGMTQ…LEHAIHRAVV (230 aa). Residues 215-222 and 278-287 each bind ATP; these read GETGTGKE and ADNGTLFLDE. Residues 479–498 constitute a DNA-binding region (H-T-H motif); the sequence is WAACARMLETDVANLHRLAK.

Its pathway is nitrogen metabolism; nitric oxide reduction. In terms of biological role, required for the expression of anaerobic nitric oxide (NO) reductase, acts as a transcriptional activator for at least the norVW operon. Activation also requires sigma-54. The protein is Anaerobic nitric oxide reductase transcription regulator NorR of Escherichia coli O6:H1 (strain CFT073 / ATCC 700928 / UPEC).